Reading from the N-terminus, the 198-residue chain is Large ribosomal subunit protein bL25 (198 aa).

Belongs to the bacterial ribosomal protein bL25 family. CTC subfamily. As to quaternary structure, part of the 50S ribosomal subunit; part of the 5S rRNA/L5/L18/L25 subcomplex. Contacts the 5S rRNA. Binds to the 5S rRNA independently of L5 and L18.

In terms of biological role, this is one of the proteins that binds to the 5S RNA in the ribosome where it forms part of the central protuberance. The polypeptide is Large ribosomal subunit protein bL25 (Phocaeicola vulgatus (strain ATCC 8482 / DSM 1447 / JCM 5826 / CCUG 4940 / NBRC 14291 / NCTC 11154) (Bacteroides vulgatus)).